The primary structure comprises 483 residues: Probable pectate lyase 12 (483 aa).

The N-terminal stretch at 1–24 is a signal peptide; that stretch reads MMLQRSCIVLFFSLFLLVPQMVFS. Residues N27 and N50 are each glycosylated (N-linked (GlcNAc...) asparagine). The Ca(2+) site is built by D220, D244, and D248. R300 is an active-site residue.

The protein belongs to the polysaccharide lyase 1 family. The cofactor is Ca(2+).

The catalysed reaction is Eliminative cleavage of (1-&gt;4)-alpha-D-galacturonan to give oligosaccharides with 4-deoxy-alpha-D-galact-4-enuronosyl groups at their non-reducing ends.. The protein operates within glycan metabolism; pectin degradation; 2-dehydro-3-deoxy-D-gluconate from pectin: step 2/5. The polypeptide is Probable pectate lyase 12 (Arabidopsis thaliana (Mouse-ear cress)).